The sequence spans 471 residues: Glutamate--tRNA ligase 1 (471 aa).

Positions 15–25 match the 'HIGH' region motif; it reads PSPTGYLHIGG. The 'KMSKS' region signature appears at 243–247; sequence KLSKR. ATP is bound at residue Lys246.

The protein belongs to the class-I aminoacyl-tRNA synthetase family. Glutamate--tRNA ligase type 1 subfamily. Monomer.

It is found in the cytoplasm. The enzyme catalyses tRNA(Glu) + L-glutamate + ATP = L-glutamyl-tRNA(Glu) + AMP + diphosphate. Functionally, catalyzes the attachment of glutamate to tRNA(Glu) in a two-step reaction: glutamate is first activated by ATP to form Glu-AMP and then transferred to the acceptor end of tRNA(Glu). This Cereibacter sphaeroides (strain ATCC 17023 / DSM 158 / JCM 6121 / CCUG 31486 / LMG 2827 / NBRC 12203 / NCIMB 8253 / ATH 2.4.1.) (Rhodobacter sphaeroides) protein is Glutamate--tRNA ligase 1.